A 331-amino-acid chain; its full sequence is MDPRSEVLLRQAELFEGELLLAGLPADDLLGLLPQAHGWSWHAGDQAQLAARFAGRSRFDTQMPEGDYRAAVLFLPKSRELTDYLLQALASRLTGRPLYLVGEKRGGIERAAKQLAVYGKPRKLDSARHCQLWSVQIEQAPATPDLDALAQVYSLQLADGPLQVVSLPGVFAHGRLDRGSALLLEHLDSLPQGHLLDFGCGAGVIGAALKRRYPSSRVSLLDVDAFALASSRLTLARNGLEAELIAGTGIESAPGELAAIVSNPPFHQGVHTHYQASENLLTQAARHLRDGGELRLVANSFLKYPPLIERHLGPCRTLAEAEGFRIYSARR.

This sequence belongs to the methyltransferase superfamily. RsmC family. As to quaternary structure, monomer.

It is found in the cytoplasm. It carries out the reaction guanosine(1207) in 16S rRNA + S-adenosyl-L-methionine = N(2)-methylguanosine(1207) in 16S rRNA + S-adenosyl-L-homocysteine + H(+). In terms of biological role, specifically methylates the guanine in position 1207 of 16S rRNA in the 30S particle. The protein is Ribosomal RNA small subunit methyltransferase C of Ectopseudomonas mendocina (strain ymp) (Pseudomonas mendocina).